The following is a 467-amino-acid chain: MFSLKTLPFLLLLHVQISKAFPVSSKEKNTKTVQDYLEKFYQLPSNQYQSTRKNGTNVIVEKLKEMQRFFGLNVTGKPNEETLDMMKKPRCGVPDSGGFMLTPGNPKWERTNLTYRIRNYTPQLSEAEVERAIKDAFELWSVASPLIFTRISQGEADINIAFYQRDHGDNSPFDGPNGILAHAFQPGQGIGGDAHFDAEETWTNTSANYNLFLVAAHEFGHSLGLAHSSDPGALMYPNYAFRETSNYSLPQDDIDGIQAIYGLSSNPIQPTGPSTPKPCDPSLTFDAITTLRGEILFFKDRYFWRRHPQLQRVEMNFISLFWPSLPTGIQAAYEDFDRDLIFLFKGNQYWALSGYDILQGYPKDISNYGFPSSVQAIDAAVFYRSKTYFFVNDQFWRYDNQRQFMEPGYPKSISGAFPGIESKVDAVFQQEHFFHVFSGPRYYAFDLIAQRVTRVARGNKWLNCRYG.

The first 20 residues, 1-20 (MFSLKTLPFLLLLHVQISKA), serve as a signal peptide directing secretion. The propeptide at 21–100 (FPVSSKEKNT…CGVPDSGGFM (80 aa)) is activation peptide. N-linked (GlcNAc...) asparagine glycosylation is found at asparagine 54 and asparagine 73. The short motif at 89–96 (PRCGVPDS) is the Cysteine switch element. Position 91 (cysteine 91) interacts with Zn(2+). N-linked (GlcNAc...) asparagine glycosylation is present at asparagine 112. Aspartate 157 contributes to the Ca(2+) binding site. Zn(2+) contacts are provided by histidine 167 and aspartate 169. 4 residues coordinate Ca(2+): aspartate 174, glycine 175, asparagine 177, and isoleucine 179. Histidine 182 is a binding site for Zn(2+). Ca(2+) is bound by residues glycine 189, glycine 191, and aspartate 193. Histidine 195 lines the Zn(2+) pocket. 2 residues coordinate Ca(2+): aspartate 197 and glutamate 200. Residue asparagine 204 is glycosylated (N-linked (GlcNAc...) asparagine). Histidine 217 contacts Zn(2+). Glutamate 218 is a catalytic residue. The Zn(2+) site is built by histidine 221 and histidine 227. An N-linked (GlcNAc...) asparagine glycan is attached at asparagine 246. 4 Hemopexin repeats span residues 276 to 325 (PKPC…WPSL), 326 to 372 (PTGI…GFPS), 374 to 420 (VQAI…FPGI), and 421 to 464 (ESKV…WLNC). Cysteine 279 and cysteine 464 are joined by a disulfide. Aspartate 286 provides a ligand contact to Ca(2+). Positions 378 and 425 each coordinate Ca(2+).

Belongs to the peptidase M10A family. Requires Ca(2+) as cofactor. It depends on Zn(2+) as a cofactor. As to expression, neutrophils.

It localises to the cytoplasmic granule. The protein localises to the secreted. The protein resides in the extracellular space. Its subcellular location is the extracellular matrix. The catalysed reaction is Cleavage of interstitial collagens in the triple helical domain. Unlike EC 3.4.24.7, this enzyme cleaves type III collagen more slowly than type I.. Cannot be activated without removal of the activation peptide. In terms of biological role, can degrade fibrillar type I, II, and III collagens. The polypeptide is Neutrophil collagenase (MMP8) (Homo sapiens (Human)).